The chain runs to 406 residues: Purine nucleoside permease (406 aa).

An N-terminal signal peptide occupies residues 1 to 22; the sequence is MKLSTLFTLATTISTLTTFTIA.

It belongs to the NUP family.

Mammalian nucleoside transport inhibitors dipyridamole and NBMPR inhibit adenosine transport by NUP. Functionally, nucleoside permease that transports adenosine and guanosine. Does not show any transport activities towards cytidine, adenine, guanine, uridine, and uracil. This chain is Purine nucleoside permease, found in Candida albicans (Yeast).